The chain runs to 678 residues: NADPH--cytochrome P450 reductase (678 aa).

Glycine 2 carries the N-acetylglycine modification. Topologically, residues 2-22 are lumenal; that stretch reads GDSHEDTSATMPEAVAEEVSL. The helical transmembrane segment at 23–43 threads the bilayer; the sequence is FSTTDMVLFSLIVGVLTYWFI. Over 44-678 the chain is Cytoplasmic; that stretch reads FRKKKEEIPE…KGRYSLDVWS (635 aa). Positions 80-224 constitute a Flavodoxin-like domain; sequence IIVFYGSQTG…DFITWREQFW (145 aa). Residues 86–91, 138–141, 173–182, and aspartate 208 contribute to the FMN site; these read SQTGTA, ATYG, and LGNKTYEHFN. Positions 279-521 constitute an FAD-binding FR-type domain; that stretch reads KNPFLAAVTA…FVRKSQFRLP (243 aa). Residue arginine 298 coordinates NADP(+). Residues arginine 424, 454-457, 472-474, tyrosine 478, and 488-491 each bind FAD; these read RYYS, CAV, and GVAT. Residues threonine 535, 596–597, 602–606, and aspartate 639 each bind NADP(+); these read SR and KVYVQ. Tryptophan 677 lines the FAD pocket.

Belongs to the NADPH--cytochrome P450 reductase family. This sequence in the N-terminal section; belongs to the flavodoxin family. The protein in the C-terminal section; belongs to the flavoprotein pyridine nucleotide cytochrome reductase family. FAD is required as a cofactor. The cofactor is FMN.

Its subcellular location is the endoplasmic reticulum membrane. The enzyme catalyses 2 oxidized [cytochrome P450] + NADPH = 2 reduced [cytochrome P450] + NADP(+) + H(+). In terms of biological role, this enzyme is required for electron transfer from NADP to cytochrome P450 in microsomes. It can also provide electron transfer to heme oxygenase and cytochrome B5. This Rattus norvegicus (Rat) protein is NADPH--cytochrome P450 reductase.